The primary structure comprises 378 residues: Ribosomal RNA large subunit methyltransferase G (378 aa).

The protein belongs to the methyltransferase superfamily. RlmG family.

The protein localises to the cytoplasm. It catalyses the reaction guanosine(1835) in 23S rRNA + S-adenosyl-L-methionine = N(2)-methylguanosine(1835) in 23S rRNA + S-adenosyl-L-homocysteine + H(+). Its function is as follows. Specifically methylates the guanine in position 1835 (m2G1835) of 23S rRNA. The sequence is that of Ribosomal RNA large subunit methyltransferase G from Shewanella putrefaciens (strain CN-32 / ATCC BAA-453).